The following is a 669-amino-acid chain: Trissin receptor (669 aa).

Over residues 1 to 15 (MIMTMMQTVRAWQQE) the composition is skewed to polar residues. Positions 1–90 (MIMTMMQTVR…PTGQQPPRLP (90 aa)) are disordered. The Extracellular portion of the chain corresponds to 1–184 (MIMTMMQTVR…EYIFDRTDVR (184 aa)). Residues 55 to 74 (NQNNGSPNSSPNQSTSAFRQ) show a composition bias toward low complexity. Asn66 carries N-linked (GlcNAc...) asparagine glycosylation. The segment covering 79 to 89 (HPPTGQQPPRL) has biased composition (pro residues). Asn120 and Asn130 each carry an N-linked (GlcNAc...) asparagine glycan. The chain crosses the membrane as a helical span at residues 185-205 (IIFITLYTLVFCCCFFGNLLV). The Cytoplasmic segment spans residues 206-217 (ILVVTLSRRLRS). A helical membrane pass occupies residues 218–238 (ITNFFLANLAFADFCVGLFCV). At 239–269 (MQNLSIYLIESWVFGEFLCRMYQFVHSLSYT) the chain is on the extracellular side. Asn241 carries N-linked (GlcNAc...) asparagine glycosylation. Residues Cys257 and Cys340 are joined by a disulfide bond. Residues 270–290 (ASIFILVVICMERYFAIVHPI) traverse the membrane as a helical segment. Residues 291-302 (TCKQILTAARLR) are Cytoplasmic-facing. A helical membrane pass occupies residues 303–323 (MVIVTVWITSAVYSTPKFVFS). Over 324-350 (KTIKNIHTQDGQEEEICVLDREMFNSK) the chain is Extracellular. Residues 351 to 371 (LLDMINFVLLYVMPLLVMTVL) traverse the membrane as a helical segment. Topologically, residues 372 to 552 (YSKIAIALWR…SSNVLRARRG (181 aa)) are cytoplasmic. The segment covering 390–401 (VVQHQHQQPQQP) has biased composition (low complexity). 2 disordered regions span residues 390 to 481 (VVQH…RGVS) and 515 to 537 (AHHQ…AGAT). The span at 414–429 (MYHHHPHHHHHHHQHH) shows a compositional bias: basic residues. Over residues 441–454 (VGVGLGGGGGGGPG) the composition is skewed to gly residues. A compositionally biased stretch (low complexity) spans 455–470 (PSLASGGSSTTSLSRK). Residues 524 to 534 (SVGGGSGGAGA) show a composition bias toward gly residues. The chain crosses the membrane as a helical span at residues 553-573 (VVRMLIIFVLTFALCNLPYHA). The Extracellular segment spans residues 574–595 (RKMWQYWSRSYRGDSNFNALLT). A helical transmembrane segment spans residues 596–616 (PLTFLVTYFNSGVNPLLYAFL). At 617–669 (SRNFRKGMKELLLCSWKKGKGKSSSNSSMHHKRKALQTHSLPTDTTHIGNEQL) the chain is on the cytoplasmic side. The disordered stretch occupies residues 635–669 (GKGKSSSNSSMHHKRKALQTHSLPTDTTHIGNEQL). Residues 653–669 (QTHSLPTDTTHIGNEQL) show a composition bias toward polar residues.

The protein belongs to the G-protein coupled receptor 1 family.

The protein resides in the cell membrane. In terms of biological role, G-protein coupled receptor which is activated by the Trissin peptide in vitro, leading to increased intracellular calcium ion levels. This chain is Trissin receptor, found in Drosophila melanogaster (Fruit fly).